The sequence spans 410 residues: Porin-like protein GalP (410 aa).

Residues 1–25 (MKCRTLYPLVPTFALAASLPLQALA) form the signal peptide.

It belongs to the outer membrane porin (Opr) (TC 1.B.25) family.

Its function is as follows. Probable transporter, possibly involved in the gallate degradation pathway. May play a role in the uptake of low gallate concentrations that may exist in the natural habitats of P.putida. This chain is Porin-like protein GalP (galP), found in Pseudomonas putida (strain ATCC 47054 / DSM 6125 / CFBP 8728 / NCIMB 11950 / KT2440).